The chain runs to 290 residues: Protease HtpX (290 aa).

Transmembrane regions (helical) follow at residues 6-26 and 36-56; these read LFLV…NILF and ISGL…ISLL. His-143 is a Zn(2+) binding site. Glu-144 is an active-site residue. His-147 lines the Zn(2+) pocket. Transmembrane regions (helical) follow at residues 158–178 and 200–220; these read LIQG…AGVI and ITVF…VMWF. Glu-225 serves as a coordination point for Zn(2+).

Belongs to the peptidase M48B family. It depends on Zn(2+) as a cofactor.

Its subcellular location is the cell inner membrane. The sequence is that of Protease HtpX from Aeromonas hydrophila subsp. hydrophila (strain ATCC 7966 / DSM 30187 / BCRC 13018 / CCUG 14551 / JCM 1027 / KCTC 2358 / NCIMB 9240 / NCTC 8049).